The sequence spans 941 residues: Pre-mRNA-processing factor 6 (941 aa).

A disordered region spans residues Met1 to Asp79. Residues Asp39–Ala65 show a composition bias toward basic and acidic residues. The span at Ala66 to Tyr78 shows a compositional bias: acidic residues. Ser143 is subject to Phosphoserine. 3 positions are modified to phosphothreonine: Thr180, Thr266, and Thr275. Ser279 is subject to Phosphoserine. HAT repeat units follow at residues Thr384–Pro416, Asp418–Glu444, Thr445–Ala476, Asn554–Asn586, Gly588–Leu620, Gly622–Glu654, Gly689–Gln721, Glu723–Lys755, and Arg855–Gln887.

As to quaternary structure, identified in the spliceosome B complex. Identified in the spliceosome C complex. Associates with the U5 snRNP particle. Component of the U4/U6-U5 tri-snRNP complex composed of the U4, U6 and U5 snRNAs and at least PRPF3, PRPF4, PRPF6, PRPF8, PRPF31, SNRNP200, TXNL4A, SNRNP40, DDX23, CD2BP2, PPIH, SNU13, EFTUD2, SART1 and USP39, LSm proteins LSm2-8 and Sm proteins. Interacts with ARAF1. Interacts with AR and NR3C1, but not ESR1, independently of the presence of hormones. Interacts with USH1G. Post-translationally, phosphorylated by PRP4K during spliceosome assembly.

It is found in the nucleus. The protein resides in the nucleoplasm. Its subcellular location is the nucleus speckle. Its function is as follows. Involved in pre-mRNA splicing as component of the U4/U6-U5 tri-snRNP complex, one of the building blocks of the spliceosome. Enhances dihydrotestosterone-induced transactivation activity of AR, as well as dexamethasone-induced transactivation activity of NR3C1, but does not affect estrogen-induced transactivation. This Mus musculus (Mouse) protein is Pre-mRNA-processing factor 6 (Prpf6).